We begin with the raw amino-acid sequence, 90 residues long: MAFGKKPDFKKKPAQNPLFKRKRYCRFTVAGVEQIDYKDVDTLKDFIGENAKITPARLTGTKAKYQRQLDTAIKRARYLALLPFSDQHKK.

It belongs to the bacterial ribosomal protein bS18 family. Part of the 30S ribosomal subunit. Forms a tight heterodimer with protein bS6.

In terms of biological role, binds as a heterodimer with protein bS6 to the central domain of the 16S rRNA, where it helps stabilize the platform of the 30S subunit. This chain is Small ribosomal subunit protein bS18, found in Polynucleobacter asymbioticus (strain DSM 18221 / CIP 109841 / QLW-P1DMWA-1) (Polynucleobacter necessarius subsp. asymbioticus).